Here is a 1396-residue protein sequence, read N- to C-terminus: DNA-directed RNA polymerase subunit beta' (1396 aa).

Zn(2+) is bound by residues C72, C74, C87, and C90. Residues D463, D465, and D467 each coordinate Mg(2+). Zn(2+) contacts are provided by C814, C889, C896, and C899.

The protein belongs to the RNA polymerase beta' chain family. The RNAP catalytic core consists of 2 alpha, 1 beta, 1 beta' and 1 omega subunit. When a sigma factor is associated with the core the holoenzyme is formed, which can initiate transcription. Mg(2+) is required as a cofactor. The cofactor is Zn(2+).

It catalyses the reaction RNA(n) + a ribonucleoside 5'-triphosphate = RNA(n+1) + diphosphate. In terms of biological role, DNA-dependent RNA polymerase catalyzes the transcription of DNA into RNA using the four ribonucleoside triphosphates as substrates. The chain is DNA-directed RNA polymerase subunit beta' from Chlamydia trachomatis serovar L2 (strain ATCC VR-902B / DSM 19102 / 434/Bu).